A 234-amino-acid polypeptide reads, in one-letter code: Large ribosomal subunit protein uL1 (234 aa).

Belongs to the universal ribosomal protein uL1 family. In terms of assembly, part of the 50S ribosomal subunit.

Its function is as follows. Binds directly to 23S rRNA. The L1 stalk is quite mobile in the ribosome, and is involved in E site tRNA release. Protein L1 is also a translational repressor protein, it controls the translation of the L11 operon by binding to its mRNA. This Helicobacter hepaticus (strain ATCC 51449 / 3B1) protein is Large ribosomal subunit protein uL1.